Consider the following 339-residue polypeptide: Cyclin-Y-like protein 1-A (339 aa).

Over residues 1–13 (MGNTVTCCVSPDS) the composition is skewed to polar residues. The disordered stretch occupies residues 1–42 (MGNTVTCCVSPDSSPKEGRDREVTESGEPYQAQGEPQDGDVQ). Positions 14 to 24 (SPKEGRDREVT) are enriched in basic and acidic residues. Residues 141 to 263 (DIFDEKLHPI…FLELLQFNIN (123 aa)) form the Cyclin N-terminal domain.

The protein belongs to the cyclin family. Cyclin Y subfamily.

In Xenopus laevis (African clawed frog), this protein is Cyclin-Y-like protein 1-A (ccnyl1-a).